The sequence spans 510 residues: Maturase K (510 aa).

This sequence belongs to the intron maturase 2 family. MatK subfamily.

The protein localises to the plastid. It is found in the chloroplast. Its function is as follows. Usually encoded in the trnK tRNA gene intron. Probably assists in splicing its own and other chloroplast group II introns. This chain is Maturase K, found in Cestrum elegans (Red cestrum).